The sequence spans 134 residues: ATP synthase epsilon chain, chloroplastic (134 aa).

Belongs to the ATPase epsilon chain family. In terms of assembly, F-type ATPases have 2 components, CF(1) - the catalytic core - and CF(0) - the membrane proton channel. CF(1) has five subunits: alpha(3), beta(3), gamma(1), delta(1), epsilon(1). CF(0) has three main subunits: a, b and c.

It is found in the plastid. Its subcellular location is the chloroplast thylakoid membrane. Functionally, produces ATP from ADP in the presence of a proton gradient across the membrane. The chain is ATP synthase epsilon chain, chloroplastic from Liriodendron tulipifera (Tuliptree).